The sequence spans 300 residues: Acetylglutamate kinase (300 aa).

Residues 68–69, arginine 90, and asparagine 194 each bind substrate; that span reads GG.

The protein belongs to the acetylglutamate kinase family. ArgB subfamily.

It localises to the cytoplasm. The catalysed reaction is N-acetyl-L-glutamate + ATP = N-acetyl-L-glutamyl 5-phosphate + ADP. Its pathway is amino-acid biosynthesis; L-arginine biosynthesis; N(2)-acetyl-L-ornithine from L-glutamate: step 2/4. Functionally, catalyzes the ATP-dependent phosphorylation of N-acetyl-L-glutamate. In Methanocella arvoryzae (strain DSM 22066 / NBRC 105507 / MRE50), this protein is Acetylglutamate kinase.